The primary structure comprises 262 residues: Dihydroorotate dehydrogenase B (NAD(+)), electron transfer subunit (262 aa).

The 102-residue stretch at 3–104 (QLQEMMTVVS…MGPLGNGFPV (102 aa)) folds into the FAD-binding FR-type domain. FAD contacts are provided by residues 53 to 56 (RPIS), 70 to 72 (LYR), and 79 to 80 (GT). Residues C226, C231, C234, and C249 each contribute to the [2Fe-2S] cluster site.

It belongs to the PyrK family. In terms of assembly, heterotetramer of 2 PyrK and 2 PyrD type B subunits. [2Fe-2S] cluster is required as a cofactor. FAD serves as cofactor.

The protein operates within pyrimidine metabolism; UMP biosynthesis via de novo pathway; orotate from (S)-dihydroorotate (NAD(+) route): step 1/1. Its function is as follows. Responsible for channeling the electrons from the oxidation of dihydroorotate from the FMN redox center in the PyrD type B subunit to the ultimate electron acceptor NAD(+). The sequence is that of Dihydroorotate dehydrogenase B (NAD(+)), electron transfer subunit from Lactococcus lactis subsp. cremoris (strain SK11).